The primary structure comprises 481 residues: Protein nucleotidyltransferase YdiU (481 aa).

Residues Gly85, Gly87, Arg88, Lys108, Asp120, Gly121, Arg172, and Arg179 each coordinate ATP. Residue Asp248 is the Proton acceptor of the active site. Mg(2+) is bound by residues Asn249 and Asp258. Asp258 serves as a coordination point for ATP.

Belongs to the SELO family. Requires Mg(2+) as cofactor. Mn(2+) is required as a cofactor.

The enzyme catalyses L-seryl-[protein] + ATP = 3-O-(5'-adenylyl)-L-seryl-[protein] + diphosphate. It catalyses the reaction L-threonyl-[protein] + ATP = 3-O-(5'-adenylyl)-L-threonyl-[protein] + diphosphate. It carries out the reaction L-tyrosyl-[protein] + ATP = O-(5'-adenylyl)-L-tyrosyl-[protein] + diphosphate. The catalysed reaction is L-histidyl-[protein] + UTP = N(tele)-(5'-uridylyl)-L-histidyl-[protein] + diphosphate. The enzyme catalyses L-seryl-[protein] + UTP = O-(5'-uridylyl)-L-seryl-[protein] + diphosphate. It catalyses the reaction L-tyrosyl-[protein] + UTP = O-(5'-uridylyl)-L-tyrosyl-[protein] + diphosphate. Its function is as follows. Nucleotidyltransferase involved in the post-translational modification of proteins. It can catalyze the addition of adenosine monophosphate (AMP) or uridine monophosphate (UMP) to a protein, resulting in modifications known as AMPylation and UMPylation. The chain is Protein nucleotidyltransferase YdiU from Cereibacter sphaeroides (strain ATCC 17029 / ATH 2.4.9) (Rhodobacter sphaeroides).